Reading from the N-terminus, the 282-residue chain is UPF0761 membrane protein HAPS_1376 (282 aa).

The next 6 helical transmembrane spans lie at 32–52 (LLSL…LPIF), 89–109 (MGII…SSID), 124–144 (VILS…FAGA), 170–190 (LLKF…YLIV), 202–222 (VGAL…IWYI), and 234–254 (ALAT…VVLL).

This sequence belongs to the UPF0761 family.

Its subcellular location is the cell inner membrane. This chain is UPF0761 membrane protein HAPS_1376, found in Glaesserella parasuis serovar 5 (strain SH0165) (Haemophilus parasuis).